A 46-amino-acid chain; its full sequence is Protein PsbN (46 aa).

A helical transmembrane segment spans residues 10-30 (LAIIVLVVLLGLTGLGVYMAF).

This sequence belongs to the PsbN family.

It is found in the cellular thylakoid membrane. May play a role in photosystem I and II biogenesis. The chain is Protein PsbN from Prochlorococcus marinus (strain MIT 9211).